We begin with the raw amino-acid sequence, 226 residues long: MKMETFLVCLFHNADGLHQQIQEILYLLRMHIYETNLYLKQELSRLIYPNRQLSFVLLMPLSLLRNWDDIEYLTDVVDDKQTLHYAANLLTNYVLHLSMFQKLTKPYFLLAVKRVSEKLNKKQQHSFYEVLVTSETLNNYENLSKNILNTLMFAVRYVFKPTPNYSEILAELEKKNKIHHIIFNMVITDFAQIREQQMDKHLCETNNKLRQECKETIFDLKVVGNV.

The first 16 residues, 1-16, serve as a signal peptide directing secretion; it reads MKMETFLVCLFHNADG. N-linked (GlcNAc...) asparagine; by host glycosylation is found at Asn-142 and Asn-164.

The protein belongs to the asfivirus I226R family.

Its function is as follows. Plays a role in the inhibition of host NF-kappa-B and IRF3 signaling pathways. Mechanistically, promotes the degradation of host IKBKG through enhancing its ubiquitination leading to inhibition of both pathways. The polypeptide is Late protein I226R (African swine fever virus (isolate Warthog/Namibia/Wart80/1980) (ASFV)).